A 485-amino-acid chain; its full sequence is Neuropeptide F receptor (485 aa).

The Extracellular portion of the chain corresponds to 1-91 (MIISMNQTEP…DSPWYHMLIS (91 aa)). The helical transmembrane segment at 92–112 (MYGVLIVFGALGNTLVVIAVI) threads the bilayer. The Cytoplasmic segment spans residues 113–122 (RKPIMRTARN). A helical transmembrane segment spans residues 123–143 (LFILNLAISDLLLCLVTMPLT). The Extracellular portion of the chain corresponds to 144-163 (LMEILSKYWPYGSCSILCKT). Cysteine 161 and cysteine 248 are joined by a disulfide. A helical membrane pass occupies residues 164-184 (IAMLQALCIFVSTISITAIAF). Residues 185-202 (DRYQVIVYPTRDSLQFVG) lie on the Cytoplasmic side of the membrane. Residues 203 to 223 (AVTILAGIWALALLLASPLFV) form a helical membrane-spanning segment. Over 224-262 (YKELINTDTPALLQQIGLQDTIPYCIEDWPSRNGRFYYS) the chain is Extracellular. The helical transmembrane segment at 263-283 (IFSLCVQYLVPILIVSVAYFG) threads the bilayer. The Cytoplasmic segment spans residues 284 to 317 (IYNKLKSRITVVAVQASSAQRKVERGRRMKRTNC). A helical transmembrane segment spans residues 318 to 338 (LLISIAIIFGVSWLPLNFFNL). The Extracellular segment spans residues 339 to 355 (YADMERSPVTQSMLVRY). A helical transmembrane segment spans residues 356-376 (AICHMIGMSSACSNPLLYGWL). Topologically, residues 377–485 (NDNFRKEFQE…PSEVTKLMPR (109 aa)) are cytoplasmic.

It belongs to the G-protein coupled receptor 1 family. Expressed in midgut, brain lobes and ventral nerve cord of larvae. In adults, expressed in a pair of dorsolateral neurons in the protocerebrum, and the central complex and a small number of neurons in the subesophageal ganglion (at protein level). Expressed in a subset of sugar-responsive PAIN neurons in the thoracic body but is absent from other peripheral PAIN neurons.

Its subcellular location is the membrane. Receptor for NPF. Integral part of the sensory system that mediates food signaling, providing the neural basis for the regulation of food response; coordinates larval foraging and social behavior changes during development. Required in dopaminergic (DA) neurons that innervate the mushroom body for satiety to suppress appetitive memory performance; a key factor in the internal state of hunger in the brain. NPF neurons coordinately modulate diverse sensory and motor neurons important for feeding, flight, and locomotion. NPF/NPFR pathway exerts its suppressive effect on larval aversion to diverse stressful stimuli (chemical stress and noxious heat) through attenuation of TRP channel-induced neuronal excitation. NPF neural signaling system plays a physiological role in acute modulation of alcohol sensitivity in adults, rather than a general response to intoxication by sedative agents. Activation and inhibition of the NPF system reduces and enhances ethanol preference, respectively. Sexual experience, the NPF system activity and ethanol consumption are all linked; sexual deprivation is a major contributor to enhanced ethanol preference. This is Neuropeptide F receptor from Drosophila melanogaster (Fruit fly).